Reading from the N-terminus, the 791-residue chain is Subtilisin-like protease SBT5.6 (791 aa).

The N-terminal stretch at Met-1–Cys-20 is a signal peptide. A propeptide spans Ala-21–His-108 (activation peptide). An Inhibitor I9 domain is found at Val-26–Lys-104. The region spanning Ala-134–Ala-645 is the Peptidase S8 domain. Catalysis depends on Asp-160, which acts as the Charge relay system. 2 N-linked (GlcNAc...) asparagine glycosylation sites follow: Asn-193 and Asn-219. His-235 functions as the Charge relay system in the catalytic mechanism. In terms of domain architecture, PA spans Phe-400 to Leu-494. An N-linked (GlcNAc...) asparagine glycan is attached at Asn-417. The active-site Charge relay system is Ser-578. N-linked (GlcNAc...) asparagine glycans are attached at residues Asn-666, Asn-713, and Asn-761.

Belongs to the peptidase S8 family.

The protein resides in the secreted. The protein is Subtilisin-like protease SBT5.6 of Arabidopsis thaliana (Mouse-ear cress).